The following is a 235-amino-acid chain: MFIWTSGRTSSSYRHDEKRNIYQKIRDHDLLDKRKTVTALKAGEDRAILLGLAMMVCSIMMYFLLGITLLRSYMQSVWTEEAQRALLNVSITETFNCSFSCGPDCWKLSQYPCLQVYVNLTSSGEKLLLYHTEETMKINQKCSYIPKCGNNFEESMSLVSVVMENFRRHQHFPCYSDPEGNQKSVILTKLYSSNVLFHSLFWPTCMMAGGVAIVAMVKLTQYLSLLCERIQRINR.

Residues 1–45 (MFIWTSGRTSSSYRHDEKRNIYQKIRDHDLLDKRKTVTALKAGED) are ball and chain. Residues 1-46 (MFIWTSGRTSSSYRHDEKRNIYQKIRDHDLLDKRKTVTALKAGEDR) lie on the Cytoplasmic side of the membrane. A helical membrane pass occupies residues 47–67 (AILLGLAMMVCSIMMYFLLGI). The Extracellular portion of the chain corresponds to 68 to 194 (TLLRSYMQSV…VILTKLYSSN (127 aa)). N-linked (GlcNAc...) asparagine glycosylation is found at Asn88, Asn96, and Asn119. The helical transmembrane segment at 195-215 (VLFHSLFWPTCMMAGGVAIVA) threads the bilayer. Residues 216–235 (MVKLTQYLSLLCERIQRINR) lie on the Cytoplasmic side of the membrane.

It belongs to the KCNMB (TC 8.A.14.1) family. KCNMB2 subfamily. Interacts with KCNMA1 tetramer. There are probably 4 molecules of KCMNB2 per KCNMA1 tetramer. In terms of processing, N-glycosylated. Highly expressed in brain and heart. Also expressed in lung.

The protein localises to the membrane. Regulatory subunit of the calcium activated potassium KCNMA1 (maxiK) channel. Modulates the calcium sensitivity and gating kinetics of KCNMA1, thereby contributing to KCNMA1 channel diversity. Acts as a negative regulator that confers rapid and complete inactivation of KCNMA1 channel complex. The polypeptide is Calcium-activated potassium channel subunit beta-2 (Kcnmb2) (Rattus norvegicus (Rat)).